The chain runs to 134 residues: Cell division protein SepF (134 aa).

It belongs to the SepF family. As to quaternary structure, homodimer. Interacts with FtsZ.

It localises to the cytoplasm. Its function is as follows. Cell division protein that is part of the divisome complex and is recruited early to the Z-ring. Probably stimulates Z-ring formation, perhaps through the cross-linking of FtsZ protofilaments. Its function overlaps with FtsA. The sequence is that of Cell division protein SepF from Caldanaerobacter subterraneus subsp. tengcongensis (strain DSM 15242 / JCM 11007 / NBRC 100824 / MB4) (Thermoanaerobacter tengcongensis).